A 663-amino-acid chain; its full sequence is Cytoplasmic dynein 1 intermediate chain (663 aa).

Residues 17–37 show a composition bias toward basic and acidic residues; that stretch reads LREEKDRRRREKEIKDMEEAA. Disordered stretches follow at residues 17-52 and 75-107; these read LREEKDRRRREKEIKDMEEAAGRIGGGAGIDKDQRK and SVNSMTSDNSNTQTPDASLQATVNGQSGGKKQP. The span at 75 to 85 shows a compositional bias: low complexity; the sequence is SVNSMTSDNSN. The span at 86-99 shows a compositional bias: polar residues; it reads TQTPDASLQATVNG. 7 WD repeats span residues 311 to 360, 364 to 404, 413 to 454, 463 to 503, 508 to 553, 556 to 596, and 602 to 641; these read SKNR…STPE, HCQS…RTPI, AHTH…QPQD, SKAI…SGVN, RHLG…PLYS, DNSD…EVPT, and AGAPALNRVSWTPSGLHVCIGDEAGKLYVYDVAENLAQPS.

This sequence belongs to the dynein intermediate chain family. In terms of assembly, homodimer. The cytoplasmic dynein 1 complex consists of two catalytic heavy chains (HCs) and a number of non-catalytic subunits presented by intermediate chains (ICs), light intermediate chains (LICs) and light chains (LCs). High levels of isoform 1b, isoform 1c, isoform 3a and isoform 4 accumulate in early egg chambers and at stage 9 become concentrated at the posterior of the oocyte. Isoform 5a and isoform 5b are highly expressed in adult head and to a lesser extent in adult torso. Isoform 1a, isoform 2a and isoform 2b are found in all tissues examined, including ovaries, midgut, torso and head.

It is found in the cytoplasm. The protein localises to the cytoskeleton. It localises to the lysosome membrane. Its subcellular location is the nucleus membrane. Acts as one of several non-catalytic accessory components of the cytoplasmic dynein 1 complex that are thought to be involved in linking dynein to cargos and to adapter proteins that regulate dynein function. Cytoplasmic dynein 1 acts as a motor for the intracellular retrograde motility of vesicles and organelles along microtubules. The intermediate chains mediate the help dynein bind to dynactin 150 kDa component. This chain is Cytoplasmic dynein 1 intermediate chain (sw), found in Drosophila melanogaster (Fruit fly).